We begin with the raw amino-acid sequence, 346 residues long: Probable electron transfer flavoprotein subunit alpha, mitochondrial (346 aa).

Residue 285-313 (LYVAIGISGAIQHLAGMKESKMIIAINKD) participates in FAD binding.

The protein belongs to the ETF alpha-subunit/FixB family. As to quaternary structure, heterodimer of an alpha and a beta subunit. It depends on FAD as a cofactor.

Its subcellular location is the mitochondrion matrix. In terms of biological role, the electron transfer flavoprotein serves as a specific electron acceptor for several dehydrogenases, including five acyl-CoA dehydrogenases, glutaryl-CoA and sarcosine dehydrogenase. It transfers the electrons to the main mitochondrial respiratory chain via ETF-ubiquinone oxidoreductase (ETF dehydrogenase). This is Probable electron transfer flavoprotein subunit alpha, mitochondrial (ETF1) from Cryptococcus gattii serotype B (strain WM276 / ATCC MYA-4071) (Filobasidiella gattii).